We begin with the raw amino-acid sequence, 784 residues long: Cadherin-15 (784 aa).

The signal sequence occupies residues 1-21 (MGSALLLALGLLAQSLGLSWA). Positions 22–59 (VPEPKPSTLYPWRRASAPGRVRRAWVIPPISVSENHKR) are excised as a propeptide. Cadherin domains lie at 60-151 (LPYP…RPAF), 152-259 (LQDV…APEF), 260-374 (TKDE…APVF), 375-480 (PENP…DHAP), and 481-589 (ALAL…TCLP). Topologically, residues 60-605 (LPYPLVQIKS…GGGVGVSLGA (546 aa)) are extracellular. Asn106 and Asn226 each carry an N-linked (GlcNAc...) asparagine glycan. N-linked (GlcNAc...) asparagine glycans are attached at residues Asn530, Asn537, and Asn575. The helical transmembrane segment at 606 to 625 (LVIVLASTVVLLVLILLAAL) threads the bilayer. Residues 626-784 (RTRFRGHSRG…ARLADMYGHQ (159 aa)) are Cytoplasmic-facing. The disordered stretch occupies residues 676-700 (EPRATSRSLGRPPLRRDAPFSYVPQ).

In terms of tissue distribution, skeletal muscle.

Its subcellular location is the cell membrane. Its function is as follows. Cadherins are calcium-dependent cell adhesion proteins. They preferentially interact with themselves in a homophilic manner in connecting cells; cadherins may thus contribute to the sorting of heterogeneous cell types. M-cadherin is part of the myogenic program and may provide a trigger for terminal muscle differentiation. The chain is Cadherin-15 (Cdh15) from Mus musculus (Mouse).